We begin with the raw amino-acid sequence, 262 residues long: Acyl-[acyl-carrier-protein]--UDP-N-acetylglucosamine O-acyltransferase (262 aa).

Belongs to the transferase hexapeptide repeat family. LpxA subfamily. As to quaternary structure, homotrimer.

The protein resides in the cytoplasm. It catalyses the reaction a (3R)-hydroxyacyl-[ACP] + UDP-N-acetyl-alpha-D-glucosamine = a UDP-3-O-[(3R)-3-hydroxyacyl]-N-acetyl-alpha-D-glucosamine + holo-[ACP]. It functions in the pathway glycolipid biosynthesis; lipid IV(A) biosynthesis; lipid IV(A) from (3R)-3-hydroxytetradecanoyl-[acyl-carrier-protein] and UDP-N-acetyl-alpha-D-glucosamine: step 1/6. Its function is as follows. Involved in the biosynthesis of lipid A, a phosphorylated glycolipid that anchors the lipopolysaccharide to the outer membrane of the cell. In Psychromonas ingrahamii (strain DSM 17664 / CCUG 51855 / 37), this protein is Acyl-[acyl-carrier-protein]--UDP-N-acetylglucosamine O-acyltransferase.